Reading from the N-terminus, the 143-residue chain is Ribosome-binding factor A (143 aa).

Residues 119–129 (AVGDKPAVPRD) are compositionally biased toward basic and acidic residues. The disordered stretch occupies residues 119–143 (AVGDKPAVPRDDNDDPVSDNPERDA).

Belongs to the RbfA family. As to quaternary structure, monomer. Binds 30S ribosomal subunits, but not 50S ribosomal subunits or 70S ribosomes.

It is found in the cytoplasm. Its function is as follows. One of several proteins that assist in the late maturation steps of the functional core of the 30S ribosomal subunit. Associates with free 30S ribosomal subunits (but not with 30S subunits that are part of 70S ribosomes or polysomes). Required for efficient processing of 16S rRNA. May interact with the 5'-terminal helix region of 16S rRNA. In Marinobacter nauticus (strain ATCC 700491 / DSM 11845 / VT8) (Marinobacter aquaeolei), this protein is Ribosome-binding factor A.